Here is a 300-residue protein sequence, read N- to C-terminus: MAKPLSISSHPSVHLAWRAYFEMTKPKVVALMLLTVLVGMCLAMPTILPVKPLVAGLLGIAMMAGSAAALNHLIDRRIDGMMARTYNRPLPKGRVSATRALLFAALLGCLGFVILYVFTNPLTAWLTFASLIGYALIYTAYLKRATPQNIVIGGLAGAMPPLLGWTAVTNQFHGHALLLVIIIFLWTPPHFWALAIHRRAEYAKVDIPMLPVTHGVEFTKTCILLYTILLAMACLLPVLVGMSGPLYFVCSSLLSTGFIYKAWQLKYQDSEGLAMQVFRFSIYHLMLLFMALLLDHYLWA.

Transmembrane regions (helical) follow at residues 28-48, 54-74, 100-120, 122-142, 149-169, 176-196, 222-242, 243-263, and 280-300; these read VVALMLLTVLVGMCLAMPTIL, VAGLLGIAMMAGSAAALNHLI, ALLFAALLGCLGFVILYVFTN, LTAWLTFASLIGYALIYTAYL, NIVIGGLAGAMPPLLGWTAVT, ALLLVIIIFLWTPPHFWALAI, CILLYTILLAMACLLPVLVGM, SGPLYFVCSSLLSTGFIYKAW, and FSIYHLMLLFMALLLDHYLWA.

Belongs to the UbiA prenyltransferase family. Protoheme IX farnesyltransferase subfamily.

The protein resides in the cell inner membrane. The catalysed reaction is heme b + (2E,6E)-farnesyl diphosphate + H2O = Fe(II)-heme o + diphosphate. The protein operates within porphyrin-containing compound metabolism; heme O biosynthesis; heme O from protoheme: step 1/1. Functionally, converts heme B (protoheme IX) to heme O by substitution of the vinyl group on carbon 2 of heme B porphyrin ring with a hydroxyethyl farnesyl side group. This is Protoheme IX farnesyltransferase 1 from Shewanella sp. (strain ANA-3).